We begin with the raw amino-acid sequence, 1162 residues long: Isoleucine--tRNA ligase (1162 aa).

The short motif at 50–60 is the 'HIGH' region element; the sequence is PSANGMPGIHH. The short motif at 710–714 is the 'KMSKS' region element; that stretch reads KMSKR. Lys713 lines the ATP pocket.

It belongs to the class-I aminoacyl-tRNA synthetase family. IleS type 2 subfamily. In terms of assembly, monomer. Zn(2+) is required as a cofactor.

The protein localises to the cytoplasm. The catalysed reaction is tRNA(Ile) + L-isoleucine + ATP = L-isoleucyl-tRNA(Ile) + AMP + diphosphate. Catalyzes the attachment of isoleucine to tRNA(Ile). As IleRS can inadvertently accommodate and process structurally similar amino acids such as valine, to avoid such errors it has two additional distinct tRNA(Ile)-dependent editing activities. One activity is designated as 'pretransfer' editing and involves the hydrolysis of activated Val-AMP. The other activity is designated 'posttransfer' editing and involves deacylation of mischarged Val-tRNA(Ile). This is Isoleucine--tRNA ligase from Bacteroides thetaiotaomicron (strain ATCC 29148 / DSM 2079 / JCM 5827 / CCUG 10774 / NCTC 10582 / VPI-5482 / E50).